The primary structure comprises 161 residues: UPF0506 protein SJCHGC02965 (161 aa).

The signal sequence occupies residues 1–13; sequence QLLILCLVTVINS. 9 N-linked (GlcNAc...) asparagine glycosylation sites follow: Asn-15, Asn-19, Asn-31, Asn-43, Asn-47, Asn-59, Asn-63, Asn-75, and Asn-121. Intrachain disulfides connect Cys-127–Cys-141, Cys-134–Cys-145, and Cys-140–Cys-150.

Belongs to the UPF0506 family.

It is found in the secreted. The polypeptide is UPF0506 protein SJCHGC02965 (Schistosoma japonicum (Blood fluke)).